We begin with the raw amino-acid sequence, 226 residues long: Deoxyribose-phosphate aldolase (226 aa).

The active-site Proton donor/acceptor is Asp84. Lys146 functions as the Schiff-base intermediate with acetaldehyde in the catalytic mechanism. The active-site Proton donor/acceptor is Lys188.

The protein belongs to the DeoC/FbaB aldolase family. DeoC type 1 subfamily.

The protein resides in the cytoplasm. The catalysed reaction is 2-deoxy-D-ribose 5-phosphate = D-glyceraldehyde 3-phosphate + acetaldehyde. The protein operates within carbohydrate degradation; 2-deoxy-D-ribose 1-phosphate degradation; D-glyceraldehyde 3-phosphate and acetaldehyde from 2-deoxy-alpha-D-ribose 1-phosphate: step 2/2. In terms of biological role, catalyzes a reversible aldol reaction between acetaldehyde and D-glyceraldehyde 3-phosphate to generate 2-deoxy-D-ribose 5-phosphate. The protein is Deoxyribose-phosphate aldolase of Pyrobaculum arsenaticum (strain DSM 13514 / JCM 11321 / PZ6).